Here is a 123-residue protein sequence, read N- to C-terminus: Small ribosomal subunit protein uS12 (123 aa).

The disordered stretch occupies residues 1-30 (MPTIQQLVRKGRQDKVEKNKTPALEGSPQR). Basic and acidic residues predominate over residues 11 to 20 (GRQDKVEKNK). Asp89 is subject to 3-methylthioaspartic acid.

It belongs to the universal ribosomal protein uS12 family. As to quaternary structure, part of the 30S ribosomal subunit. Contacts proteins S8 and S17. May interact with IF1 in the 30S initiation complex.

Its function is as follows. With S4 and S5 plays an important role in translational accuracy. Functionally, interacts with and stabilizes bases of the 16S rRNA that are involved in tRNA selection in the A site and with the mRNA backbone. Located at the interface of the 30S and 50S subunits, it traverses the body of the 30S subunit contacting proteins on the other side and probably holding the rRNA structure together. The combined cluster of proteins S8, S12 and S17 appears to hold together the shoulder and platform of the 30S subunit. This chain is Small ribosomal subunit protein uS12 (rpsL), found in Streptomyces avermitilis (strain ATCC 31267 / DSM 46492 / JCM 5070 / NBRC 14893 / NCIMB 12804 / NRRL 8165 / MA-4680).